We begin with the raw amino-acid sequence, 239 residues long: Ribosomal RNA large subunit methyltransferase E (239 aa).

The tract at residues 1–20 (MTKAPIAGNRTGRKLGQRVK) is disordered. Basic residues predominate over residues 11–20 (TGRKLGQRVK). G81, W83, D104, D120, and D144 together coordinate S-adenosyl-L-methionine. The active-site Proton acceptor is the K184.

The protein belongs to the class I-like SAM-binding methyltransferase superfamily. RNA methyltransferase RlmE family.

It localises to the cytoplasm. The catalysed reaction is uridine(2552) in 23S rRNA + S-adenosyl-L-methionine = 2'-O-methyluridine(2552) in 23S rRNA + S-adenosyl-L-homocysteine + H(+). Its function is as follows. Specifically methylates the uridine in position 2552 of 23S rRNA at the 2'-O position of the ribose in the fully assembled 50S ribosomal subunit. This chain is Ribosomal RNA large subunit methyltransferase E, found in Rhizobium leguminosarum bv. trifolii (strain WSM2304).